Consider the following 632-residue polypeptide: POU domain, class 2, transcription factor 1 (632 aa).

Phosphothreonine occurs at positions 157 and 163. In terms of domain architecture, POU-specific spans 167 to 241; sequence EEPSDLEELE…LLEKWLNDAE (75 aa). Residue S170 is modified to Phosphoserine. The span at 243 to 258 shows a compositional bias: low complexity; it reads LSSDSTASSPSALNSP. The segment at 243–273 is disordered; it reads LSSDSTASSPSALNSPGLGAEGLNRRRKKRT. A DNA-binding region (homeobox) is located at residues 268–327; it reads RRKKRTSIETNIRVALEKSFMENQKPTSEDITLIAEQLNMEKEVIRVWFCNRRQKEKRIN. 2 positions are modified to phosphoserine: S274 and S337. The interval 385 to 448 is disordered; the sequence is GTTDSTSNNT…STPLPSPLGA (64 aa). The segment covering 394 to 441 has biased composition (low complexity); sequence TATVISTAPPASSAVTSPSLSPSPSASASTSEASSASETSTTQTTSTP.

It belongs to the POU transcription factor family. Class-2 subfamily. Interacts with POU2AF1; the interaction increases POU2F1 transactivation activity. Interacts with NR3C1, AR, PGR and HCFC1. Phosphorylated by PRKDC. Widely expressed.

It localises to the nucleus. Transcription factor that binds to the octamer motif (5'-ATTTGCAT-3') and activates the promoters of the genes for some small nuclear RNAs (snRNA) and of genes such as those for histone H2B and immunoglobulins. Modulates transcription transactivation by NR3C1, AR and PGR. This Rattus norvegicus (Rat) protein is POU domain, class 2, transcription factor 1 (Pou2f1).